The sequence spans 353 residues: 41 kDa protein (353 aa).

The tract at residues 132-197 is disordered; it reads QSSHASALEQ…DNNSSDTIKD (66 aa). Basic and acidic residues predominate over residues 157–169; it reads LDNKGKSDSENCN.

This chain is 41 kDa protein, found in Lactobacillus helveticus (Lactobacillus suntoryeus).